Consider the following 762-residue polypeptide: Dolichyl-phosphate-mannose--protein mannosyltransferase 4 (762 aa).

A compositionally biased stretch (basic residues) spans 1 to 10; sequence MSVPKKRNHG. Residues 1–24 are disordered; the sequence is MSVPKKRNHGKLPPSTKDVDDPSL. Residues 1–53 lie on the Lumenal side of the membrane; the sequence is MSVPKKRNHGKLPPSTKDVDDPSLKYTKAAPKCEQVAEHWLLQPLPEPESRYS. A helical transmembrane segment spans residues 54-74; that stretch reads FWVTIVTLLAFAARFYKIWYP. Residues 75 to 136 lie on the Cytoplasmic side of the membrane; it reads KEVVFDEVHF…IGYSYETHPA (62 aa). Residues 137-157 traverse the membrane as a helical segment; that stretch reads PYIAYRSFNAILGTLTVPIMF. The Lumenal segment spans residues 158-166; sequence NTLKELNFR. Residues 167–187 traverse the membrane as a helical segment; that stretch reads AITCAFASLLVAIDTAHVTET. Topologically, residues 188-189 are cytoplasmic; sequence RL. The helical transmembrane segment at 190-210 threads the bilayer; that stretch reads ILLDAILIISIAATMYCYVRF. At 211 to 217 the chain is on the lumenal side; the sequence is YKCQLRQ. The helical transmembrane segment at 218–238 threads the bilayer; it reads PFTWSWYIWLHATGLSLSFVI. At 239–242 the chain is on the cytoplasmic side; sequence STKY. Residues 243–263 traverse the membrane as a helical segment; that stretch reads VGVMTYSAIGFAAVVNLWQLL. The Lumenal segment spans residues 264-283; sequence DIKAGLSLRQFMRHFSKRLN. A helical membrane pass occupies residues 284-304; it reads GLVLIPFVIYLFWFWVHFTVL. Topologically, residues 305 to 593 are cytoplasmic; sequence NTSGPGDAFM…NGDEKKQIYF (289 aa). MIR domains are found at residues 331-391, 399-458, and 464-521; these read SKTV…VLPP, GQAV…FQPL, and GHVL…VDEI. A helical membrane pass occupies residues 594-614; it reads IGNIIGWWFQVISLAVFVGII. The Lumenal segment spans residues 615-635; the sequence is VADLITRHRGYYALNKMTREK. A helical transmembrane segment spans residues 636–656; it reads LYGPLMFFFVSWCCHYFPFFL. Over 657-716 the chain is Cytoplasmic; that stretch reads MARQKFLHHYLPAHLIACLFSGALWEVIFSDCKSLDLEKDEDISGASYERNPKVYVKPYT. The chain crosses the membrane as a helical span at residues 717–737; the sequence is VFLVCVSCAVAWFFVYFSPLV. The Lumenal segment spans residues 738 to 762; it reads YGDVSLSPSEVVSREWFDIELNFSK. Residue asparagine 759 is glycosylated (N-linked (GlcNAc...) asparagine).

This sequence belongs to the glycosyltransferase 39 family. Forms a functional homodimer and may form a heterodimer with PMT6. Interacts with RCR1.

It is found in the endoplasmic reticulum membrane. It carries out the reaction a di-trans,poly-cis-dolichyl beta-D-mannosyl phosphate + L-seryl-[protein] = 3-O-(alpha-D-mannosyl)-L-seryl-[protein] + a di-trans,poly-cis-dolichyl phosphate + H(+). It catalyses the reaction a di-trans,poly-cis-dolichyl beta-D-mannosyl phosphate + L-threonyl-[protein] = 3-O-(alpha-D-mannosyl)-L-threonyl-[protein] + a di-trans,poly-cis-dolichyl phosphate + H(+). The protein operates within protein modification; protein glycosylation. Its function is as follows. Protein O-mannosyltransferase involved in O-glycosylation which is essential for cell wall rigidity. Forms a homodimeric complex to transfer mannose from Dol-P-mannose to Ser or Thr residues on proteins. Specifically acts on secretory proteins with an ER-luminally oriented Ser/Thr-rich region flanked by a membrane anchor such as FUS1, AXL2, GAS1, KEX2, MID2, WSC1, WSC2, OPY2, PRM5, RAX2, or YNL176. The chain is Dolichyl-phosphate-mannose--protein mannosyltransferase 4 from Saccharomyces cerevisiae (strain ATCC 204508 / S288c) (Baker's yeast).